Here is a 160-residue protein sequence, read N- to C-terminus: Small ribosomal subunit protein uS9 (160 aa).

This sequence belongs to the universal ribosomal protein uS9 family.

This is Small ribosomal subunit protein uS9 from Mesorhizobium japonicum (strain LMG 29417 / CECT 9101 / MAFF 303099) (Mesorhizobium loti (strain MAFF 303099)).